Reading from the N-terminus, the 382-residue chain is Protein RecA (382 aa).

The disordered stretch occupies residues 1–20 (MPADVKAAQSSAGDSRPGER). Residue 79-86 (GPESSGKT) coordinates ATP. Residues 360–369 (SAAAKPSAKT) show a composition bias toward low complexity. Residues 360–382 (SAAAKPSAKTADTDKKLVADGAA) form a disordered region. Residues 370–382 (ADTDKKLVADGAA) are compositionally biased toward basic and acidic residues.

It belongs to the RecA family.

The protein resides in the cytoplasm. Can catalyze the hydrolysis of ATP in the presence of single-stranded DNA, the ATP-dependent uptake of single-stranded DNA by duplex DNA, and the ATP-dependent hybridization of homologous single-stranded DNAs. It interacts with LexA causing its activation and leading to its autocatalytic cleavage. The sequence is that of Protein RecA from Synechococcus sp. (strain CC9311).